Consider the following 154-residue polypeptide: Ribonuclease HI (154 aa).

The RNase H type-1 domain maps to 1 to 142 (MQKQIEIFTD…CDQLAKAGAE (142 aa)). Residues Asp-10, Glu-48, Asp-70, and Asp-134 each contribute to the Mg(2+) site.

Belongs to the RNase H family. Monomer. Mg(2+) serves as cofactor.

The protein resides in the cytoplasm. The catalysed reaction is Endonucleolytic cleavage to 5'-phosphomonoester.. In terms of biological role, endonuclease that specifically degrades the RNA of RNA-DNA hybrids. This Pasteurella multocida (strain Pm70) protein is Ribonuclease HI (rnhA).